Consider the following 810-residue polypeptide: Interleukin-4 receptor subunit alpha (810 aa).

Residues 1–25 form the signal peptide; it reads MGRLCTKFLTSVGCLILLLVTGSGS. At 26 to 233 the chain is on the extracellular side; that stretch reads IKVLGEPTCF…NHFQLPLIQR (208 aa). A disulfide bridge links C34 with C44. N72 carries N-linked (GlcNAc...) asparagine glycosylation. An intrachain disulfide couples C75 to C87. The Fibronectin type-III domain occupies 126–224; the sequence is APDNLTLHTN…EWSPSITWYN (99 aa). 3 N-linked (GlcNAc...) asparagine glycosylation sites follow: N129, N135, and N163. S165 carries the post-translational modification Phosphoserine. The WSXWS motif signature appears at 213-217; the sequence is WSEWS. A helical membrane pass occupies residues 234 to 257; it reads LPLGVTISCLCIPLFCLFCYFSIT. The Cytoplasmic portion of the chain corresponds to 258–810; that stretch reads KIKKIWWDQI…PVGALGIAVS (553 aa). Residues 263-271 carry the Box 1 motif motif; sequence WWDQIPTPA. Residues 441–557 are required for IRS1 activation and IL4-induced cell growth; sequence GSGQASVSWA…ESWEQILHMS (117 aa). Residues 460–482 are disordered; sequence ATCQVTEQPSHPGPLSGSPAQSA. Y500 carries the post-translational modification Phosphotyrosine. Residues 510 to 546 form a disordered region; sequence APNPGELAPEQQQADHLEEEEPPSPADPHSSGPPMQP. A required for IL4-induced gene expression region spans residues 557–653; sequence SVLQHGAAAG…SSVPLFTFGL (97 aa). Phosphotyrosine is present on residues Y575, Y603, and Y631. The interval 586-672 is disordered; it reads AAQDPGVPGV…NSDPPKSPPE (87 aa). Residues 635-647 show a composition bias toward low complexity; that stretch reads QNPVPNQSPSSVP. Positions 707–712 match the ITIM motif motif; sequence IVYSSL. The tract at residues 766 to 810 is disordered; the sequence is PPEANLMSAPKTPSNLSGEGKGPGHSPVPSQTTEVPVGALGIAVS.

This sequence belongs to the type I cytokine receptor family. Type 4 subfamily. In terms of assembly, the functional IL4 receptor is formed by initial binding of IL4 to IL4R. Subsequent recruitment to the complex of the common gamma chain, in immune cells, creates a type I receptor and, in non-immune cells, of IL13RA1 forms a type II receptor. IL4R can also interact with the IL13/IL13RA1 complex to form a similar type II receptor. Interacts with the SH2-containing phosphatases, PTPN6/SHIP1, PTPN11/SHIP2 and INPP5D/SHIP. Interacts with JAK3. Interacts with PIK3C3. Interacts with JAK1 through a Box 1-containing region; inhibited by SOCS5. Interacts with SOCS5; inhibits IL4 signaling. Interacts with CLM1. Interacts with IL13RA2. On IL4 binding, phosphorylated on C-terminal tyrosine residues. In terms of processing, soluble IL4R can also be produced by proteolytic cleavage at the cell surface (shedding). In terms of tissue distribution, expressed in both Th1 and Th2 cells.

Its subcellular location is the cell membrane. It localises to the secreted. Receptor for both interleukin 4 and interleukin 13. Couples to the JAK1/2/3-STAT6 pathway. The IL4 response is involved in promoting Th2 differentiation. The IL4/IL13 responses are involved in regulating IgE production and, chemokine and mucus production at sites of allergic inflammation. In certain cell types, can signal through activation of insulin receptor substrates, IRS1/IRS2. This is Interleukin-4 receptor subunit alpha (Il4r) from Mus musculus (Mouse).